A 121-amino-acid polypeptide reads, in one-letter code: MIQQESRLVVADNSGAKEALCIRVLGGTRKRYATVGDVIVVAIKSVIPASDVKKGAVSKAIIVRTKKEIRRPDGSYIRFDDNACVLLNAGGDIRGSRIFGPVARELRATNMKIVSLAPEVL.

The protein belongs to the universal ribosomal protein uL14 family. In terms of assembly, part of the 50S ribosomal subunit. Forms a cluster with proteins L3 and L19. In the 70S ribosome, L14 and L19 interact and together make contacts with the 16S rRNA in bridges B5 and B8.

Its function is as follows. Binds to 23S rRNA. Forms part of two intersubunit bridges in the 70S ribosome. In Parabacteroides distasonis (strain ATCC 8503 / DSM 20701 / CIP 104284 / JCM 5825 / NCTC 11152), this protein is Large ribosomal subunit protein uL14.